A 194-amino-acid chain; its full sequence is MSEVEKKEEETTTTTTVEKTEEKKEETSSFAPAAEIKEYAADVEPNVEYEATLKRDVVEVKTNEENEDTLFEIRAKLYRFDTDPSPQWKERGTGNVRFLEDKDSKRIRVVMRRDKTLKVCLNHHISPALSLGEMTGSDKSWVWKCPKDFSDEEKPEGVEELFAIRFATPENAGLFKTEFQKCQAKNEAIEKKTE.

2 stretches are compositionally biased toward basic and acidic residues: residues 1 to 10 and 18 to 27; these read MSEVEKKEEE and EKTEEKKEET. The segment at 1 to 36 is disordered; sequence MSEVEKKEEETTTTTTVEKTEEKKEETSSFAPAAEI. The 147-residue stretch at 42–188 folds into the RanBD1 domain; sequence DVEPNVEYEA…FQKCQAKNEA (147 aa).

This sequence belongs to the RANBP1 family.

This is Ran-specific GTPase-activating protein homolog (ranbp1) from Dictyostelium discoideum (Social amoeba).